A 195-amino-acid polypeptide reads, in one-letter code: Probable cobalt-precorrin-6B C(15)-methyltransferase (decarboxylating) (195 aa).

Residues Thr24, 48 to 52, Asp72, and Ala101 each bind S-adenosyl-L-methionine; that span reads GCGTG.

Belongs to the methyltransferase superfamily. Archaeal-type CbiT family.

The enzyme catalyses Co-precorrin-6B + S-adenosyl-L-methionine = Co-precorrin-7 + S-adenosyl-L-homocysteine + CO2. The protein operates within cofactor biosynthesis; adenosylcobalamin biosynthesis; cob(II)yrinate a,c-diamide from sirohydrochlorin (anaerobic route): step 8/10. Functionally, catalyzes the methylation of C-15 in cobalt-precorrin-6B followed by the decarboxylation of C-12 to form cobalt-precorrin-7. The polypeptide is Probable cobalt-precorrin-6B C(15)-methyltransferase (decarboxylating) (Pyrobaculum calidifontis (strain DSM 21063 / JCM 11548 / VA1)).